The following is a 400-amino-acid chain: Keratin, type I cytoskeletal 19 (400 aa).

The tract at residues 1–79 is head; that stretch reads MTSYSYRQSS…TASDGLLAGN (79 aa). An Omega-N-methylarginine modification is found at arginine 7. A phosphoserine mark is found at serine 14 and serine 22. Arginine 24 is subject to Asymmetric dimethylarginine; alternate. An Omega-N-methylarginine; alternate modification is found at arginine 24. Arginine 32 is subject to Omega-N-methylarginine. 2 positions are modified to phosphoserine: serine 35 and serine 40. An omega-N-methylarginine mark is found at arginine 43 and arginine 51. Phosphoserine is present on residues serine 57 and serine 72. The segment at 80–115 is coil 1A; the sequence is EKLTMQNLNDRLASYLDKVRALEAANGELEVKIRDW. In terms of domain architecture, IF rod spans 80-391; it reads EKLTMQNLND…SLLEGQEDHY (312 aa). The interval 116–133 is linker 1; that stretch reads YQKQGPGPSRDYSHYYTT. The tract at residues 134–225 is coil 1B; the sequence is IQDLRDKILG…KNHEEEISTL (92 aa). The linker 12 stretch occupies residues 226–248; the sequence is RGQVGGQVSVEVDSAPGTDLAKI. Positions 244–390 are necessary for interaction with PNN; it reads DLAKILSDMR…RSLLEGQEDH (147 aa). The coil 2 stretch occupies residues 249–387; sequence LSDMRSQYEV…ATYRSLLEGQ (139 aa). Threonine 323 is subject to Phosphothreonine. A rod-like helical tail region spans residues 388-400; sequence EDHYSNLSASKVL. Tyrosine 391 carries the phosphotyrosine modification. Serine 395 is modified (phosphoserine).

Belongs to the intermediate filament family. In terms of assembly, heterotetramer of two type I and two type II keratins. Interacts with PNN and the actin-binding domain of DMD.

Its function is as follows. Involved in the organization of myofibers. Together with KRT8, helps to link the contractile apparatus to dystrophin at the costameres of striated muscle. The sequence is that of Keratin, type I cytoskeletal 19 from Pongo abelii (Sumatran orangutan).